The following is a 394-amino-acid chain: Actin-related protein 2-A (394 aa).

Residues Gly-160–Gly-162, Arg-214–Glu-218, and Gly-305–Tyr-310 contribute to the ATP site.

This sequence belongs to the actin family. ARP2 subfamily. Component of the Arp2/3 complex composed of actr2/arp2, actr3/arp3, arpc1 (arpc1a or arpc1b), arpc2, arpc3, arpc4 and arpc5.

It is found in the cytoplasm. The protein localises to the cytoskeleton. Its subcellular location is the cell projection. The protein resides in the nucleus. In terms of biological role, ATP-binding component of the Arp2/3 complex, a multiprotein complex that mediates actin polymerization upon stimulation by nucleation-promoting factor (NPF). The Arp2/3 complex mediates the formation of branched actin networks in the cytoplasm, providing the force for cell motility. Seems to contact the pointed end of the daughter actin filament. In addition to its role in the cytoplasmic cytoskeleton, the Arp2/3 complex also promotes actin polymerization in the nucleus, thereby regulating gene transcription and repair of damaged DNA. The Arp2/3 complex promotes homologous recombination (HR) repair in response to DNA damage by promoting nuclear actin polymerization, leading to drive motility of double-strand breaks (DSBs). This is Actin-related protein 2-A (actr2-a) from Xenopus laevis (African clawed frog).